The following is a 445-amino-acid chain: Amino-acid acetyltransferase (445 aa).

The N-acetyltransferase domain maps to 299-438; that stretch reads EQVRQAQIDD…QGLYNYQRNS (140 aa).

This sequence belongs to the acetyltransferase family. ArgA subfamily.

The protein resides in the cytoplasm. It carries out the reaction L-glutamate + acetyl-CoA = N-acetyl-L-glutamate + CoA + H(+). It functions in the pathway amino-acid biosynthesis; L-arginine biosynthesis; N(2)-acetyl-L-ornithine from L-glutamate: step 1/4. This chain is Amino-acid acetyltransferase, found in Vibrio atlanticus (strain LGP32) (Vibrio splendidus (strain Mel32)).